A 102-amino-acid polypeptide reads, in one-letter code: Beta-defensin 116 (102 aa).

The first 23 residues, 1–23 (MSVMKPCLMTIAILMILAQKTPG), serve as a signal peptide directing secretion. Cystine bridges form between C40–C67, C47–C61, and C51–C68. A disordered region spans residues 83–102 (EDYDSNSNLSVTNSSSYSHI). The segment covering 87-102 (SNSNLSVTNSSSYSHI) has biased composition (low complexity).

This sequence belongs to the beta-defensin family.

Its subcellular location is the secreted. In terms of biological role, has antibacterial activity. The polypeptide is Beta-defensin 116 (DEFB116) (Homo sapiens (Human)).